Here is a 70-residue protein sequence, read N- to C-terminus: UPF0352 protein PSHAa1818 (70 aa).

This sequence belongs to the UPF0352 family.

This chain is UPF0352 protein PSHAa1818, found in Pseudoalteromonas translucida (strain TAC 125).